The sequence spans 73 residues: Large ribosomal subunit protein bL31 (73 aa).

It belongs to the bacterial ribosomal protein bL31 family. Type A subfamily. As to quaternary structure, part of the 50S ribosomal subunit.

Functionally, binds the 23S rRNA. The protein is Large ribosomal subunit protein bL31 of Sinorhizobium fredii (strain NBRC 101917 / NGR234).